The following is a 240-amino-acid chain: Putative S-adenosylmethionine-dependent methyltransferase RcsF (240 aa).

Positions 5–142 (ISPIGHVRSC…YVPYADIVPD (138 aa)) constitute a TsaA-like domain. S-adenosyl-L-methionine is bound by residues 22–24 (PRQ), 63–64 (HQ), R91, and 122–125 (LDGT).

It belongs to the tRNA methyltransferase O family.

This is Putative S-adenosylmethionine-dependent methyltransferase RcsF (rcsF) from Pseudomonas aeruginosa.